The primary structure comprises 308 residues: Acyltransferase drtE (308 aa).

Residues 35–159 (PALVMNPGYN…AAEAKDNFSR (125 aa)) form the AB hydrolase-1 domain.

It belongs to the polyketide transferase af380 family.

It functions in the pathway secondary metabolite biosynthesis; terpenoid biosynthesis. Functionally, acyltransferase; part of the gene cluster that mediates the biosynthesis of various drimane-type sesquiterpene esters, compounds that exhibit diverse biological activities and are widely present in eukaryotes. The pathway begins with the synthesis of the backbone drimenol by the terpene cyclase drtB using farnesyl pyrophosphate (FPP) as substrate. The cytochrome P450 monooxygenase drtD is then responsible for the hydroxylations at C-6, C-9 and C-12, as well as the oxidation of hydroxyl groups at C-6 and C-11 to a ketone and an aldehyde, respectively. Then, the biosynthesis can go in two directions, either the hydroxylated drimenol is further hydroxylated at C-2 and C-3 by an enzyme(s) not associated with the drt cluster, or the FAD-binding oxidoreductase drtC further oxidizes C-11 or C-12 to form the butyrolactone ring. DrtB, drtD and drtC are solely responsible for the formation of the different drimane structures observed during drimane sesquiterpenes biosynthesis. The polyketide synthase drtA synthesizes different lengths (C6 and C8) of PKS chains, which are then oxidized to varying degrees by the short-chain dehydrogenase drtF. Finally, these PKS chains are transferred onto drimane sesquiterpenes by the acyltransferase drtE, forming the sesquiterpene esters. In addition to the different fatty acyl-CoA chains produced by drtA, drtE is also able to use cinnamoyl-CoA as a substrate. The protein is Acyltransferase drtE of Aspergillus calidoustus.